The sequence spans 337 residues: B3 domain-containing protein REM16 (337 aa).

DNA-binding regions (TF-B3) lie at residues 22–116 and 223–321; these read TLHF…FDGQ and FLVF…FRGE.

It is found in the nucleus. This chain is B3 domain-containing protein REM16 (REM16), found in Arabidopsis thaliana (Mouse-ear cress).